We begin with the raw amino-acid sequence, 451 residues long: Chromosomal replication initiator protein DnaA (451 aa).

A domain I, interacts with DnaA modulators region spans residues 1–73; the sequence is MNAHPKEIWE…IRSLQMVTSQ (73 aa). Residues 73 to 112 are domain II; it reads QKYNVKFLISSELPEEFLTLDTINEQNIKGSIIVSDEMSA. Positions 113–329 are domain III, AAA+ region; that stretch reads MLNPKYTFTS…GALIRIVAFS (217 aa). Positions 157, 159, 160, and 161 each coordinate ATP. A domain IV, binds dsDNA region spans residues 330 to 451; the sequence is SLTNKEISVD…NDLTKRLDQQ (122 aa).

Belongs to the DnaA family. Oligomerizes as a right-handed, spiral filament on DNA at oriC.

The protein localises to the cytoplasm. Functionally, plays an essential role in the initiation and regulation of chromosomal replication. ATP-DnaA binds to the origin of replication (oriC) to initiate formation of the DNA replication initiation complex once per cell cycle. Binds the DnaA box (a 9 base pair repeat at the origin) and separates the double-stranded (ds)DNA. Forms a right-handed helical filament on oriC DNA; dsDNA binds to the exterior of the filament while single-stranded (ss)DNA is stabiized in the filament's interior. The ATP-DnaA-oriC complex binds and stabilizes one strand of the AT-rich DNA unwinding element (DUE), permitting loading of DNA polymerase. After initiation quickly degrades to an ADP-DnaA complex that is not apt for DNA replication. Binds acidic phospholipids. This is Chromosomal replication initiator protein DnaA from Clostridium kluyveri (strain NBRC 12016).